The sequence spans 335 residues: Karyogamy protein KAR4 (335 aa).

Residues 1 to 25 form a disordered region; that stretch reads MAFQDPTYDQNKSRHINNSHLQGPN. Positions 16–25 are enriched in polar residues; the sequence is INNSHLQGPN.

Belongs to the MT-A70-like family. Component of the MIS (mRNA N6-methyladenosine (m6A) methylation) complex, at least composed of IME4, KAR4, MUM2, SLZ1, and VIR1. Interacts with VIR1.

The protein resides in the nucleus. The protein localises to the cytoplasm. In terms of biological role, component of the MIS complex, a complex that mediates N6-methyladenosine (m6A) methylation of meiotic mRNAs and is required for initiation of meiosis, progression through the meiotic divisions and sporulation. May assist STE12 in the pheromone-dependent expression of KAR3 and CIK1. In Saccharomyces cerevisiae (strain ATCC 204508 / S288c) (Baker's yeast), this protein is Karyogamy protein KAR4 (KAR4).